Consider the following 197-residue polypeptide: Protein TIFY 9 (197 aa).

The segment covering 57-73 (STGNNSDSSAKSRSVPS) has biased composition (polar residues). Residues 57 to 84 (STGNNSDSSAKSRSVPSTPREDQPQIPI) are disordered. Positions 98 to 132 (LVSGTVPMTIFYNGSVSVFQVSRNKAGEIMKVANE) constitute a Tify domain. The Jas signature appears at 168-193 (PIARRKSLQRFLEKRKERLVSTSPYY). The short motif at 170–177 (ARRKSLQR) is the Nuclear localization signal element.

This sequence belongs to the TIFY/JAZ family. As to quaternary structure, homo- and heterodimer. Interacts with MYC2, MYC3, MYC4, AFPH2/NINJA, TIFY10A/JAZ1, TIFY10B/JAZ2, TIFY6B/JAZ3, TIFY6A/JAZ4, TIFY11B/JAZ6, TIFY5A/JAZ8, TIFY7/JAZ9, TIFY3A/JAZ11 and TIFY3B/JAZ12. Isoform 1 and isoform 2 interact with COI1. Isoform 3 does not interact with COI1. Interacts with RHD6 and RSL1. Ubiquitinated. Targeted for degradation by the SCF(COI1) E3 ubiquitin ligase-proteasome pathway during jasmonate signaling.

It is found in the nucleus. Functionally, repressor of jasmonate (JA) responses that lacks the entire Jas domain and possesses severe JA insensitivity and resistance to JA-induced degradation. Acts as an endogenous repressor of JA signal output in JA-stimulated cells. Modulator of JA-controlled growth inhibition in response to wounding. In terms of biological role, repressor of jasmonate (JA) responses that lacks part of the Jas domain and possesses JA insensitivity and partial resistance to JA-induced degradation. Repressor of jasmonate (JA) responses. Interacts with and suppresses RHD6 and RSL1 transcription factor activities to negatively regulate jasmonate-stimulated root hair development. This chain is Protein TIFY 9 (TIFY9), found in Arabidopsis thaliana (Mouse-ear cress).